The primary structure comprises 507 residues: Dolichyl pyrophosphate Man9GlcNAc2 alpha-1,3-glucosyltransferase (507 aa).

The Cytoplasmic segment spans residues 1–3; the sequence is MEK. A helical transmembrane segment spans residues 4-24; that stretch reads WSLMTITVLLALTVRWTVSLG. The Lumenal portion of the chain corresponds to 25–114; that stretch reads SYSGAGKPPM…SQSHKLFMRT (90 aa). Asn59 carries an N-linked (GlcNAc...) asparagine glycan. A helical transmembrane segment spans residues 115 to 135; the sequence is TVFVADLLIYIPAVILYCCSL. Topologically, residues 136 to 143 are cytoplasmic; that stretch reads KETSTKKK. The helical transmembrane segment at 144 to 164 threads the bilayer; that stretch reads VSSALCILLYPGLILIDHGHF. The Lumenal portion of the chain corresponds to 165-168; sequence QYNS. Residues 169 to 189 form a helical membrane-spanning segment; the sequence is VSLGFALWGVLCLSYDWDLLG. The Cytoplasmic segment spans residues 190–226; that stretch reads SAAFCLALNYKQMELYHSLPFFCYLLGKCFKKGLKGK. The chain crosses the membrane as a helical span at residues 227–247; that stretch reads GLLLLIKLAGTVVASFAVCWL. At 248 to 297 the chain is on the lumenal side; that stretch reads PFCTDVEQIMQVLRRLFPIDRGLFEDKVANIWCSLSVLIKIKNVVSPQTQ. The chain crosses the membrane as a helical span at residues 298-318; the sequence is LKLSFAVTFLSLLPTCIKLTV. Topologically, residues 319 to 338 are cytoplasmic; the sequence is QPSLRGFKLTLVSCALSFFL. Residues 339–359 traverse the membrane as a helical segment; sequence FSFQVHEKSILLVSVPVCLII. At 360–361 the chain is on the lumenal side; it reads NE. The helical transmembrane segment at 362 to 382 threads the bilayer; sequence VPFMATWFLLVSTFSMLPLLL. Residues 383–387 are Cytoplasmic-facing; that stretch reads KDGLL. Residues 388–408 form a helical membrane-spanning segment; that stretch reads LPYAVTTLAFLSACVASFAIF. The Lumenal portion of the chain corresponds to 409 to 441; it reads EKTSAKDLQLKPFSQSLRGYVSWFKLFPKIVRS. Residues 442-462 form a helical membrane-spanning segment; sequence LFLLSVTLMGVLSVMSAAVHP. At 463 to 473 the chain is on the cytoplasmic side; it reads PQRFPDLFPVS. The helical transmembrane segment at 474 to 494 threads the bilayer; sequence VSSISCLHFLFFLVYFNVIIL. Residues 495–507 lie on the Lumenal side of the membrane; it reads WDSKNSRNQKKVS.

It belongs to the ALG6/ALG8 glucosyltransferase family.

The protein localises to the endoplasmic reticulum membrane. It carries out the reaction an alpha-D-Man-(1-&gt;2)-alpha-D-Man-(1-&gt;2)-alpha-D-Man-(1-&gt;3)-[alpha-D-Man-(1-&gt;2)-alpha-D-Man-(1-&gt;3)-[alpha-D-Man-(1-&gt;2)-alpha-D-Man-(1-&gt;6)]-alpha-D-Man-(1-&gt;6)]-beta-D-Man-(1-&gt;4)-beta-D-GlcNAc-(1-&gt;4)-alpha-D-GlcNAc-diphospho-di-trans,poly-cis-dolichol + a di-trans,poly-cis-dolichyl beta-D-glucosyl phosphate = an alpha-D-Glc-(1-&gt;3)-alpha-D-Man-(1-&gt;2)-alpha-D-Man-(1-&gt;2)-alpha-D-Man-(1-&gt;3)-[alpha-D-Man-(1-&gt;2)-alpha-D-Man-(1-&gt;3)-[alpha-D-Man-(1-&gt;2)-alpha-D-Man-(1-&gt;6)]-alpha-D-Man-(1-&gt;6)]-beta-D-Man-(1-&gt;4)-beta-D-GlcNAc-(1-&gt;4)-alpha-D-GlcNAc-diphospho-di-trans,poly-cis-dolichol + a di-trans,poly-cis-dolichyl phosphate + H(+). It functions in the pathway protein modification; protein glycosylation. In terms of biological role, dolichyl pyrophosphate Man9GlcNAc2 alpha-1,3-glucosyltransferase that operates in the biosynthetic pathway of dolichol-linked oligosaccharides, the glycan precursors employed in protein asparagine (N)-glycosylation. The assembly of dolichol-linked oligosaccharides begins on the cytosolic side of the endoplasmic reticulum membrane and finishes in its lumen. The sequential addition of sugars to dolichol pyrophosphate produces dolichol-linked oligosaccharides containing fourteen sugars, including two GlcNAcs, nine mannoses and three glucoses. Once assembled, the oligosaccharide is transferred from the lipid to nascent proteins by oligosaccharyltransferases. In the lumen of the endoplasmic reticulum, adds the first glucose residue from dolichyl phosphate glucose (Dol-P-Glc) onto the lipid-linked oligosaccharide intermediate Man(9)GlcNAc(2)-PP-Dol to produce Glc(1)Man(9)GlcNAc(2)-PP-Dol. Glc(1)Man(9)GlcNAc(2)-PP-Dol is a substrate for ALG8, the following enzyme in the biosynthetic pathway. The polypeptide is Dolichyl pyrophosphate Man9GlcNAc2 alpha-1,3-glucosyltransferase (Gallus gallus (Chicken)).